The primary structure comprises 201 residues: Dephospho-CoA kinase (201 aa).

Residues 4–201 (IIGITGGIAS…LEGGRQDDRD (198 aa)) form the DPCK domain. 12-17 (ASGKST) provides a ligand contact to ATP.

The protein belongs to the CoaE family.

It localises to the cytoplasm. It carries out the reaction 3'-dephospho-CoA + ATP = ADP + CoA + H(+). Its pathway is cofactor biosynthesis; coenzyme A biosynthesis; CoA from (R)-pantothenate: step 5/5. Catalyzes the phosphorylation of the 3'-hydroxyl group of dephosphocoenzyme A to form coenzyme A. The sequence is that of Dephospho-CoA kinase from Streptococcus pneumoniae serotype 4 (strain ATCC BAA-334 / TIGR4).